Consider the following 170-residue polypeptide: Superoxide dismutase [Fe] (170 aa).

Fe cation contacts are provided by His-27, His-81, Asp-163, and His-167.

It belongs to the iron/manganese superoxide dismutase family. Homodimer. The cofactor is Fe cation.

The catalysed reaction is 2 superoxide + 2 H(+) = H2O2 + O2. Destroys superoxide anion radicals which are normally produced within the cells and which are toxic to biological systems. In Raoultella planticola (Klebsiella planticola), this protein is Superoxide dismutase [Fe] (sodA).